The primary structure comprises 325 residues: Probable arylamine N-acetyltransferase 1 (325 aa).

C72 serves as the catalytic Acyl-thioester intermediate. Active-site residues include H112 and D127.

The protein belongs to the arylamine N-acetyltransferase family.

It catalyses the reaction an arylamine + acetyl-CoA = an N-acetylarylamine + CoA. This chain is Probable arylamine N-acetyltransferase 1, found in Dictyostelium discoideum (Social amoeba).